Consider the following 720-residue polypeptide: Neurochondrin (720 aa).

This sequence belongs to the neurochondrin family.

Its subcellular location is the cytoplasm. The protein resides in the cytosol. It localises to the cell projection. The protein localises to the dendrite. It is found in the postsynapse. Functionally, probably involved in signal transduction, in the nervous system. Required for the spatial learning process. May also be involved in neurite outgrowth. This Xenopus laevis (African clawed frog) protein is Neurochondrin (ncdn).